A 205-amino-acid polypeptide reads, in one-letter code: Outer-membrane lipoprotein carrier protein (205 aa).

A signal peptide spans 1–21; that stretch reads MRFLAVATMVVALMVPWSVRA.

It belongs to the LolA family. In terms of assembly, monomer.

The protein resides in the periplasm. In terms of biological role, participates in the translocation of lipoproteins from the inner membrane to the outer membrane. Only forms a complex with a lipoprotein if the residue after the N-terminal Cys is not an aspartate (The Asp acts as a targeting signal to indicate that the lipoprotein should stay in the inner membrane). The sequence is that of Outer-membrane lipoprotein carrier protein from Methylobacillus flagellatus (strain ATCC 51484 / DSM 6875 / VKM B-1610 / KT).